The chain runs to 96 residues: MKIRPLHDRVVVRRVEEEQKTAGGIVLPGNAQEKPTRGEVLAVGNGRILESGEVRPLDVKVGDTVIFKDGFGVEKQKIDGEEVLIMSESDILAVAE.

Belongs to the GroES chaperonin family. As to quaternary structure, heptamer of 7 subunits arranged in a ring. Interacts with the chaperonin GroEL.

The protein resides in the cytoplasm. Together with the chaperonin GroEL, plays an essential role in assisting protein folding. The GroEL-GroES system forms a nano-cage that allows encapsulation of the non-native substrate proteins and provides a physical environment optimized to promote and accelerate protein folding. GroES binds to the apical surface of the GroEL ring, thereby capping the opening of the GroEL channel. The chain is Co-chaperonin GroES from Chromohalobacter salexigens (strain ATCC BAA-138 / DSM 3043 / CIP 106854 / NCIMB 13768 / 1H11).